Reading from the N-terminus, the 247-residue chain is 2,3-bisphosphoglycerate-dependent phosphoglycerate mutase (247 aa).

Residues 8-15 (RHGESQWN), 21-22 (TG), arginine 60, 87-90 (ERHY), lysine 98, 114-115 (RR), and 183-184 (GN) each bind substrate. The Tele-phosphohistidine intermediate role is filled by histidine 9. Glutamate 87 serves as the catalytic Proton donor/acceptor.

The protein belongs to the phosphoglycerate mutase family. BPG-dependent PGAM subfamily.

It catalyses the reaction (2R)-2-phosphoglycerate = (2R)-3-phosphoglycerate. The protein operates within carbohydrate degradation; glycolysis; pyruvate from D-glyceraldehyde 3-phosphate: step 3/5. Catalyzes the interconversion of 2-phosphoglycerate and 3-phosphoglycerate. The protein is 2,3-bisphosphoglycerate-dependent phosphoglycerate mutase of Chlorobium phaeobacteroides (strain DSM 266 / SMG 266 / 2430).